A 793-amino-acid polypeptide reads, in one-letter code: MIEALRQQLLDDPRSWYAFLRHLVASQRDSWLYTDLQRACADFREQLPEGYAEGIGPLEDFVAHTQEVIFRDPWMVFAWRPRPGRWIYVRIHREQLALEELSTDAYLQAKEGIVGLGAEGEAVLTVDFRDFRPVSRRLRDESTIGDGLTHLNRRLAGRIFSDLAAGRSQILEFLSLHRLDGQNLMLSNGNTDFDSLRQTVQYLGTLPRETPWAEIREDMRRRGFAPGWGNTAGRVRETMRLLMDLLDSPSPAALESFLDRIPMISRILIVSIHGWFAQDKVLGRPDTGGQVVYILDQARALEREMRNRLRQQGVDVEPRILIATRLIPESDGTTCDQRLEPVVGAENVQILRVPFRYPDGRIHPHWISRFKIWPWLERYAQDLEREVLAELGSRPDLIIGNYSDGNLVATLLSERLGVTQCNIAHALEKSKYLYSDLHWRDHEQDHHFACQFTADLIAMNAADIIVTSTYQEIAGNDREIGQYEGHQDYTLPGLYRVENGIDVFDSKFNIVSPGADPRFYFSYARTEERPSFLEPEIESLLFGREPGADRRGVLEDRQKPLLLSMARMDRIKNLSGLAELYGRSSRLRGLANLVIIGGHVDVGNSRDAEEREEIRRMHEIMDHYQLDGQLRWVGALLDKTVAGELYRVVADGRGVFVQPALFEAFGLTVIEAMSSGLPVFATRFGGPLEIIEDGVSGFHIDPNDHEATAERLADFLEAARERPKYWLEISDAALARVAERYTWERYAERLMTIARIFGFWRFVLDRESQVMERYLQMFRHLQWRPLAHAVPME.

The segment at 263 to 742 (MISRILIVSI…ALARVAERYT (480 aa)) is GT-B glycosyltransferase.

This sequence belongs to the glycosyltransferase 1 family. In terms of assembly, homotetramer.

The catalysed reaction is an NDP-alpha-D-glucose + D-fructose = a ribonucleoside 5'-diphosphate + sucrose + H(+). It carries out the reaction ADP-alpha-D-glucose + D-fructose = sucrose + ADP + H(+). Its function is as follows. Catalyzes the reversible conversion of sucrose and a nucleotide disphosphate (NDP) into fructose and NDP-glucose; although the reaction is freely reversible in vitro, the physiological reaction seems to be sucrose cleavage. Unlike characterized plant enzymes prefers ADP as a cosubstrate, whereas plants prefer UDP. The KM for sucrose is 45-fold lower in the presence of ADP than UDP. Its preference for ADP over UDP suggests it may directly link sucrose and glycogen metabolism. The chain is Sucrose synthase from Acidithiobacillus caldus (strain ATCC 51756 / DSM 8584 / KU).